A 540-amino-acid chain; its full sequence is Chaperonin GroEL (540 aa).

ATP is bound by residues 30-33, 87-91, G414, 479-481, and D495; these read TLGP, DGTTT, and NAL.

The protein belongs to the chaperonin (HSP60) family. In terms of assembly, forms a cylinder of 14 subunits composed of two heptameric rings stacked back-to-back. Interacts with the co-chaperonin GroES.

The protein resides in the cytoplasm. The enzyme catalyses ATP + H2O + a folded polypeptide = ADP + phosphate + an unfolded polypeptide.. Its function is as follows. Together with its co-chaperonin GroES, plays an essential role in assisting protein folding. The GroEL-GroES system forms a nano-cage that allows encapsulation of the non-native substrate proteins and provides a physical environment optimized to promote and accelerate protein folding. In Carboxydothermus hydrogenoformans (strain ATCC BAA-161 / DSM 6008 / Z-2901), this protein is Chaperonin GroEL.